We begin with the raw amino-acid sequence, 690 residues long: Choline transporter-like 1 (690 aa).

A helical membrane pass occupies residues Ile-23–Ser-43. Asn-134 carries N-linked (GlcNAc...) asparagine glycosylation. 4 helical membrane passes run Leu-203–Val-223, Trp-237–Tyr-259, Ala-282–Ile-302, and Leu-334–Leu-354. Asn-391 carries an N-linked (GlcNAc...) asparagine glycan. 4 helical membrane-spanning segments follow: residues Ile-415–Ile-435, Leu-464–Leu-484, Phe-565–Leu-585, and Phe-594–Leu-614.

Belongs to the CTL (choline transporter-like) family.

It is found in the membrane. The polypeptide is Choline transporter-like 1 (Anopheles gambiae (African malaria mosquito)).